The primary structure comprises 380 residues: Chaperone protein DnaJ (380 aa).

One can recognise a J domain in the interval 5-70 (DFYEVLGVSR…QKRAAYDQYG (66 aa)). The CR-type zinc-finger motif lies at 135–213 (GCEKDIEIPT…CHGDGRVQKT (79 aa)). Zn(2+) is bound by residues Cys-148, Cys-151, Cys-165, Cys-168, Cys-187, Cys-190, Cys-201, and Cys-204. CXXCXGXG motif repeat units follow at residues 148-155 (CEPCDGTG), 165-172 (CSTCHGQG), 187-194 (CPTCHGKG), and 201-208 (CNSCHGDG).

It belongs to the DnaJ family. As to quaternary structure, homodimer. It depends on Zn(2+) as a cofactor.

It localises to the cytoplasm. In terms of biological role, participates actively in the response to hyperosmotic and heat shock by preventing the aggregation of stress-denatured proteins and by disaggregating proteins, also in an autonomous, DnaK-independent fashion. Unfolded proteins bind initially to DnaJ; upon interaction with the DnaJ-bound protein, DnaK hydrolyzes its bound ATP, resulting in the formation of a stable complex. GrpE releases ADP from DnaK; ATP binding to DnaK triggers the release of the substrate protein, thus completing the reaction cycle. Several rounds of ATP-dependent interactions between DnaJ, DnaK and GrpE are required for fully efficient folding. Also involved, together with DnaK and GrpE, in the DNA replication of plasmids through activation of initiation proteins. This Aliivibrio salmonicida (strain LFI1238) (Vibrio salmonicida (strain LFI1238)) protein is Chaperone protein DnaJ.